The sequence spans 358 residues: Aromatic amino acid aminotransferase (358 aa).

Lys-214 is subject to N6-(pyridoxal phosphate)lysine.

This sequence belongs to the class-II pyridoxal-phosphate-dependent aminotransferase family. Homodimer. Pyridoxal 5'-phosphate is required as a cofactor.

It carries out the reaction an aromatic L-alpha-amino acid + 2-oxoglutarate = an aromatic oxo-acid + L-glutamate. Functionally, aminotransferase that catalyzes the conversion of aromatic amino acids and 2-oxoglutarate into corresponding aromatic oxo acids and L-glutamate. This Rhodococcus jostii (strain RHA1) protein is Aromatic amino acid aminotransferase.